The following is a 127-amino-acid chain: Mating pheromone 4 (127 aa).

The N-terminal stretch at 1-16 (MKAIFIILAILMVTQA) is a signal peptide. Positions 17–42 (FKMTSKVKSMNMSRNMSKNTSTLGTK) are excised as a propeptide.

The protein resides in the secreted. Mating ciliate pheromones (or gamones) are diffusible extracellular communication signals that distinguish different intraspecific classes of cells commonly referred to as 'mating types'. They prepare the latter for conjugation by changing their cell surface properties. The sequence is that of Mating pheromone 4 (PHR4) from Euplotoides octocarinatus (Freshwater ciliate).